The following is a 210-amino-acid chain: LexA repressor (210 aa).

Positions 30-50 (RVEIAREIGFKSPNAAEEHLK) form a DNA-binding region, H-T-H motif. Residues S127 and K164 each act as for autocatalytic cleavage activity in the active site.

This sequence belongs to the peptidase S24 family. As to quaternary structure, homodimer.

The enzyme catalyses Hydrolysis of Ala-|-Gly bond in repressor LexA.. Represses a number of genes involved in the response to DNA damage (SOS response), including recA and lexA. In the presence of single-stranded DNA, RecA interacts with LexA causing an autocatalytic cleavage which disrupts the DNA-binding part of LexA, leading to derepression of the SOS regulon and eventually DNA repair. The chain is LexA repressor from Actinobacillus pleuropneumoniae serotype 5b (strain L20).